A 78-amino-acid chain; its full sequence is Defensin-like protein 281 (78 aa).

A signal peptide spans 1-23 (MASTKYLVLLFICLSVLLTPGLG). 3 disulfide bridges follow: C37-C60, C46-C72, and C50-C74.

This sequence belongs to the DEFL family.

The protein localises to the secreted. In Arabidopsis thaliana (Mouse-ear cress), this protein is Defensin-like protein 281.